A 207-amino-acid polypeptide reads, in one-letter code: Superoxide dismutase [Mn] (207 aa).

Mn(2+) contacts are provided by H28, H76, D160, and H164.

It belongs to the iron/manganese superoxide dismutase family. The cofactor is Mn(2+).

Its subcellular location is the secreted. It carries out the reaction 2 superoxide + 2 H(+) = H2O2 + O2. Functionally, destroys superoxide anion radicals which are normally produced within the cells and which are toxic to biological systems. This Mycolicibacterium paratuberculosis (strain ATCC BAA-968 / K-10) (Mycobacterium paratuberculosis) protein is Superoxide dismutase [Mn] (sodA).